The sequence spans 372 residues: Cytochrome b (372 aa).

4 helical membrane passes run 25-45, 69-90, 105-125, and 170-190; these read FGSM…FLSM, WMMQ…YIHV, WLSG…GYVL, and FFAL…LHIM. 2 residues coordinate heme b: histidine 75 and histidine 89. Residues histidine 174 and histidine 188 each coordinate heme b. Histidine 193 is a binding site for a ubiquinone. 4 helical membrane-spanning segments follow: residues 218 to 238, 280 to 300, 312 to 332, and 339 to 358; these read YKDL…ISFI, LGGA…PFTH, FMQL…WTAT, and YTMI…MSNP.

It belongs to the cytochrome b family. The cytochrome bc1 complex contains 3 respiratory subunits (MT-CYB, CYC1 and UQCRFS1), 2 core proteins (UQCRC1 and UQCRC2) and probably 6 low-molecular weight proteins. Requires heme b as cofactor.

The protein localises to the mitochondrion inner membrane. Component of the ubiquinol-cytochrome c reductase complex (complex III or cytochrome b-c1 complex) that is part of the mitochondrial respiratory chain. The b-c1 complex mediates electron transfer from ubiquinol to cytochrome c. Contributes to the generation of a proton gradient across the mitochondrial membrane that is then used for ATP synthesis. The sequence is that of Cytochrome b (MT-CYB) from Acrantophis madagascariensis (Madagascar ground boa).